Here is a 129-residue protein sequence, read N- to C-terminus: Small ribosomal subunit protein eS8 (129 aa).

The interval 1-29 (MSVWQGRSRRKPTGGLYRPARKKRKYEMG) is disordered.

It belongs to the eukaryotic ribosomal protein eS8 family. Part of the 30S ribosomal subunit.

This chain is Small ribosomal subunit protein eS8 (rps8e), found in Methanocaldococcus jannaschii (strain ATCC 43067 / DSM 2661 / JAL-1 / JCM 10045 / NBRC 100440) (Methanococcus jannaschii).